We begin with the raw amino-acid sequence, 413 residues long: Probable elongation factor 1-gamma 2 (413 aa).

The GST N-terminal domain occupies 1 to 82 (MALVMHTYKG…YVSRKNGDNS (82 aa)). A GST C-terminal domain is found at 87-215 (SLIEYAHIEQ…AKQTEAVPPV (129 aa)). The interval 207 to 260 (KQTEAVPPVPTKKAPQPAKPKEEPKKAAPVAEAPKPAEEEEAPKPKAKNPLDLL) is disordered. Residues 253 to 413 (AKNPLDLLPP…EALLDAKCFK (161 aa)) enclose the EF-1-gamma C-terminal domain.

In terms of assembly, EF-1 is composed of four subunits: alpha, beta, delta, and gamma.

Its function is as follows. Probably plays a role in anchoring the complex to other cellular components. The chain is Probable elongation factor 1-gamma 2 from Arabidopsis thaliana (Mouse-ear cress).